The primary structure comprises 335 residues: Methionine import ATP-binding protein MetN 1 (335 aa).

An ABC transporter domain is found at Ile2–Val242. Residue Gly38 to Ser45 coordinates ATP.

The protein belongs to the ABC transporter superfamily. Methionine importer (TC 3.A.1.24) family. In terms of assembly, the complex is composed of two ATP-binding proteins (MetN), two transmembrane proteins (MetI) and a solute-binding protein (MetQ).

It localises to the cell inner membrane. It carries out the reaction L-methionine(out) + ATP + H2O = L-methionine(in) + ADP + phosphate + H(+). It catalyses the reaction D-methionine(out) + ATP + H2O = D-methionine(in) + ADP + phosphate + H(+). In terms of biological role, part of the ABC transporter complex MetNIQ involved in methionine import. Responsible for energy coupling to the transport system. The polypeptide is Methionine import ATP-binding protein MetN 1 (Pseudomonas fluorescens (strain ATCC BAA-477 / NRRL B-23932 / Pf-5)).